The sequence spans 315 residues: Protein OPG185 (315 aa).

The first 16 residues, 1–16 (MTRLPILLLLISLVYA), serve as a signal peptide directing secretion. Positions 17 to 121 (TPFPQTSKKI…NDTDKVDYEE (105 aa)) constitute an Ig-like V-type domain. Residues 17–279 (TPFPQTSKKI…SNYKTKDFVE (263 aa)) lie on the Virion surface side of the membrane. Cys-34 and Cys-103 are oxidised to a cystine. 4 N-linked (GlcNAc...) asparagine; by host glycosylation sites follow: Asn-37, Asn-69, Asn-112, and Asn-161. Residues 193-202 (NTVSASSGES) show a composition bias toward polar residues. The interval 193 to 213 (NTVSASSGESTTDETPEPITD) is disordered. The N-linked (GlcNAc...) asparagine; by host glycan is linked to Asn-254. The helical transmembrane segment at 280–303 (IFGITALIILSAVAIFCITYYIYN) threads the bilayer. At 304-315 (KRSRKYKTENKV) the chain is on the intravirion side.

The protein belongs to the orthopoxvirus OPG185 family. Heterodimerizes with OPG040. The heterodimer OPG185-OPG040 interacts with components of the entry fusion complex OPG143 and OPG094. Heterodimer with C3/VPC protein; disulfide-linked. Post-translationally, glycosylated; contains phosphate and sulfate-substituted glycans. O-glycosylation is required for hemagglutination and hemadsorption activities of infected cell membranes.

It localises to the virion membrane. Its subcellular location is the host membrane. Its function is as follows. Prevents cell to cell fusion by interacting with and directing the viral OPG040 protein on the host plasma membrane. The OPG185-OPG040 complex associates with components of the entry fusion complex (EFC) presumably to avoid superinfection and syncytium formation. Via its interaction with C3/VCP protein, protects the infected cell and probably also the extracellular enveloped virus from complement attack. In Homo sapiens (Human), this protein is Protein OPG185 (OPG185).